Consider the following 225-residue polypeptide: Ribonuclease HII (225 aa).

The RNase H type-2 domain maps to 28 to 220 (DIIAGTDEVG…VKEYVDISQE (193 aa)). A divalent metal cation is bound by residues Asp-34, Glu-35, and Asp-129.

This sequence belongs to the RNase HII family. It depends on Mn(2+) as a cofactor. Mg(2+) serves as cofactor.

It is found in the cytoplasm. It carries out the reaction Endonucleolytic cleavage to 5'-phosphomonoester.. Its function is as follows. Endonuclease that specifically degrades the RNA of RNA-DNA hybrids. In Desulfotalea psychrophila (strain LSv54 / DSM 12343), this protein is Ribonuclease HII.